The chain runs to 131 residues: Small ribosomal subunit protein uS11 (131 aa).

Belongs to the universal ribosomal protein uS11 family. Part of the 30S ribosomal subunit. Interacts with proteins S7 and S18. Binds to IF-3.

Functionally, located on the platform of the 30S subunit, it bridges several disparate RNA helices of the 16S rRNA. Forms part of the Shine-Dalgarno cleft in the 70S ribosome. The polypeptide is Small ribosomal subunit protein uS11 (Bacillus pumilus (strain SAFR-032)).